We begin with the raw amino-acid sequence, 64 residues long: DNA gyrase inhibitor YacG (64 aa).

Residues C9, C12, C28, and C32 each coordinate Zn(2+). The interval 42 to 64 (DEENAIPGAPDMSDSDGWSEEQY) is disordered. A compositionally biased stretch (acidic residues) spans 54–64 (SDSDGWSEEQY).

The protein belongs to the DNA gyrase inhibitor YacG family. Interacts with GyrB. Requires Zn(2+) as cofactor.

Inhibits all the catalytic activities of DNA gyrase by preventing its interaction with DNA. Acts by binding directly to the C-terminal domain of GyrB, which probably disrupts DNA binding by the gyrase. The polypeptide is DNA gyrase inhibitor YacG (Vibrio vulnificus (strain YJ016)).